A 484-amino-acid polypeptide reads, in one-letter code: Pentatricopeptide repeat-containing protein At1g09190 (484 aa).

PPR repeat units lie at residues 66-100, 101-135, 136-166, 167-197, 198-232, 233-267, 269-299, 300-334, 336-366, and 372-406; these read NVLVFNAMIKCYSLVGPPLESLSFFSSMKSRGIWA, DEYTYAPLLKSCSSLSDLRFGKCVHGELIRTGFHR, LGKIRIGVVELYTSGGRMGDAQKVFDEMSER, NVVVWNLMIRGFCDSGDVERGLHLFKQMSER, SIVSWNSMISSLSKCGRDREALELFCEMIDQGFDP, DEATVVTVLPISASLGVLDTGKWIHSTAESSGLFK, FITVGNALVDFYCKSGDLEAATAIFRKMQRR, NVVSWNTLISGSAVNGKGEFGIDLFDAMIEEGKVA, NEATFLGVLACCSYTGQVERGEELFGLMMER, and RTEHYGAMVDLMSRSGRITEAFKFLKNMPVNANAA. The tract at residues 407 to 482 is type E motif; the sequence is MWGSLLSACR…STGQSTICDV (76 aa).

The protein belongs to the PPR family. PCMP-E subfamily.

The polypeptide is Pentatricopeptide repeat-containing protein At1g09190 (PCMP-E70) (Arabidopsis thaliana (Mouse-ear cress)).